A 234-amino-acid polypeptide reads, in one-letter code: AGEDHGRGPYVQADLAYAYEHITHDYPEPTGTKKDKISTVSDYFRNIRTHSIHPRVSVGYDFGGWRIAADYARYRKWNDNKYSVDIKELENKNQNKRDLKTENQENGTFHAVSSLGLSAVYDFKLNDKFKPYIGARVAYGHVRHSIDSTKKTTKFLTSSYGGLNPTVYTEENTQNAHHQSNSIRRVGLGVIAGVGFDITPKLTLDAGYRYHNWGRLENTRFKTHEASLGVRYRF.

Alanine 1 is a signal peptide.

The protein belongs to the opacity porin family.

It is found in the cell outer membrane. Its function is as follows. Implicated in a number of adherence functions. OPA proteins are implicated in pathogenesis and are subject to phase variation. This Neisseria gonorrhoeae protein is Opacity protein V28.